Here is a 417-residue protein sequence, read N- to C-terminus: Mitochondrial tRNA-specific 2-thiouridylase 1 (417 aa).

Residues 10–17 (ALSGGVDS) and Met36 each bind ATP. The tract at residues 96–98 (NPD) is interaction with target base in tRNA. Cys101 functions as the Nucleophile in the catalytic mechanism. Cys101 and Cys222 are disulfide-bonded. Gly126 provides a ligand contact to ATP. Residues 171–173 (KDQ) are interaction with tRNA. Residue Cys222 is the Cysteine persulfide intermediate of the active site. Positions 334–335 (RH) are interaction with tRNA. A disordered region spans residues 397–417 (KNRTRVAPEASSDSPGLHPTS). Residues 407–417 (SSDSPGLHPTS) are compositionally biased toward polar residues.

The protein belongs to the MnmA/TRMU family. In terms of tissue distribution, widely expressed but most abundant in tissues with high metabolic rate including heart, liver and brain. Expression is low in spleen, testis, lung and skeletal muscle. Also expressed in inner ear.

It localises to the mitochondrion. The catalysed reaction is 5-taurinomethyluridine(34) in tRNA + S-sulfanyl-L-cysteinyl-[protein] + AH2 + ATP = 5-taurinomethyl-2-thiouridine(34) in tRNA + L-cysteinyl-[protein] + A + AMP + diphosphate + H(+). In terms of biological role, catalyzes the 2-thiolation of uridine at the wobble position (U34) of mitochondrial tRNA(Lys), tRNA(Glu) and tRNA(Gln). Required for the formation of 5-taurinomethyl-2-thiouridine (tm5s2U) of mitochondrial tRNA(Lys), tRNA(Glu), and tRNA(Gln) at the wobble position. ATP is required to activate the C2 atom of the wobble base. The sequence is that of Mitochondrial tRNA-specific 2-thiouridylase 1 (Trmu) from Mus musculus (Mouse).